A 153-amino-acid chain; its full sequence is Lipoprotein signal peptidase (153 aa).

The next 2 helical transmembrane spans lie at 61 to 81 (YFFV…LVKN) and 85 to 105 (SLWL…NFID). Active-site residues include aspartate 114 and aspartate 130. Residues 125 to 145 (IFNVADSYLTVGVLLLILILW) form a helical membrane-spanning segment.

It belongs to the peptidase A8 family.

The protein localises to the cell membrane. It catalyses the reaction Release of signal peptides from bacterial membrane prolipoproteins. Hydrolyzes -Xaa-Yaa-Zaa-|-(S,diacylglyceryl)Cys-, in which Xaa is hydrophobic (preferably Leu), and Yaa (Ala or Ser) and Zaa (Gly or Ala) have small, neutral side chains.. The protein operates within protein modification; lipoprotein biosynthesis (signal peptide cleavage). In terms of biological role, this protein specifically catalyzes the removal of signal peptides from prolipoproteins. The polypeptide is Lipoprotein signal peptidase (Streptococcus thermophilus (strain CNRZ 1066)).